The primary structure comprises 192 residues: Elongation factor P (192 aa).

It belongs to the elongation factor P family.

It is found in the cytoplasm. Its pathway is protein biosynthesis; polypeptide chain elongation. In terms of biological role, involved in peptide bond synthesis. Stimulates efficient translation and peptide-bond synthesis on native or reconstituted 70S ribosomes in vitro. Probably functions indirectly by altering the affinity of the ribosome for aminoacyl-tRNA, thus increasing their reactivity as acceptors for peptidyl transferase. The sequence is that of Elongation factor P from Borreliella afzelii (strain PKo) (Borrelia afzelii).